The chain runs to 1113 residues: Atrial natriuretic peptide-converting enzyme (1113 aa).

The Cytoplasmic segment spans residues 1–112; the sequence is MGRVSFSVRV…QKLVTANLLR (112 aa). Residues 113-133 form a helical; Signal-anchor for type II membrane protein membrane-spanning segment; the sequence is FLLLVLIPCICALIVLLAILL. The Extracellular segment spans residues 134 to 1113; sequence SFVGTLKRVY…QTFLQKKSQG (980 aa). 3 N-linked (GlcNAc...) asparagine glycosylation sites follow: Asn147, Asn202, and Asn208. Positions 176–202 are disordered; the sequence is APSLPPSQSTPAWTPRAPSPEDQSHRN. In terms of domain architecture, FZ 1 spans 201–327; that stretch reads RNTSTCMNIT…SSVRKSCFSL (127 aa). 8 cysteine pairs are disulfide-bonded: Cys206-Cys266, Cys214-Cys259, Cys250-Cys290, Cys279-Cys324, Cys283-Cys307, Cys337-Cys350, Cys345-Cys363, and Cys357-Cys372. 2 N-linked (GlcNAc...) asparagine glycosylation sites follow: Asn298 and Asn317. 4 LDL-receptor class A domains span residues 336–372, 373–408, 409–445, and 446–483; these read LCGG…EAHC, NCSK…EQNC, DCNL…EVNC, and SCHS…ENCS. A glycan (N-linked (GlcNAc...) asparagine) is linked at Asn373. 9 disulfides stabilise this stretch: Cys374–Cys386, Cys381–Cys399, Cys393–Cys408, Cys410–Cys423, Cys418–Cys436, Cys430–Cys445, Cys447–Cys460, Cys455–Cys473, and Cys467–Cys482. N-linked (GlcNAc...) asparagine glycosylation is present at Asn411. An N-linked (GlcNAc...) asparagine glycan is attached at Asn444. N-linked (GlcNAc...) asparagine glycosylation is found at Asn481, Asn519, and Asn537. The FZ 2 domain occupies 518–641; the sequence is SNCSQCEPIT…SSDNQTCLLP (124 aa). Disulfide bonds link Cys523–Cys586, Cys531–Cys579, Cys570–Cys608, Cys597–Cys638, Cys601–Cys625, Cys648–Cys660, Cys655–Cys673, Cys667–Cys682, Cys684–Cys698, Cys692–Cys711, Cys705–Cys720, Cys723–Cys735, Cys730–Cys748, and Cys742–Cys757. Asn635 carries N-linked (GlcNAc...) asparagine glycosylation. LDL-receptor class A domains follow at residues 647 to 682, 683 to 721, and 722 to 757; these read ECSP…EENC, GCKE…KNCS, and FCQD…EWGC. N-linked (GlcNAc...) asparagine glycosylation occurs at Asn719. Positions 758–853 constitute an SRCR domain; it reads VTLSKNGNSS…SRSEISLLCS (96 aa). Asn765 and Asn828 each carry an N-linked (GlcNAc...) asparagine glycan. 6 disulfide bridges follow: Cys782-Cys884, Cys857-Cys979, Cys895-Cys911, Cys993-Cys1058, Cys1022-Cys1037, and Cys1048-Cys1077. The 234-residue stretch at 869–1102 folds into the Peptidase S1 domain; that stretch reads ILGGRTSRPG…FVGWIERQIY (234 aa). Residues His910 and Asp959 each act as charge relay system in the active site. Asn970 is a glycosylation site (N-linked (GlcNAc...) asparagine). The active-site Charge relay system is Ser1052. N-linked (GlcNAc...) asparagine glycosylation is present at Asn1089.

Belongs to the peptidase S1 family. Post-translationally, N-glycosylated; required for processing and activation. In terms of processing, activated through proteolytic processing by a trypsin-like protease; cleaved into a N-terminal propeptide and an activated corin protease fragment. Atrial natriuretic peptide-converting enzyme, 180 kDa soluble fragment is produced by cleavage by ADAM10. Cleavage by ADAM10 to produce soluble 180 kDa soluble fragment takes place after the transmembrane region and before FZ 1. A disulfide bond links the activated corin protease fragment and the N-terminal propeptide. The disulfide bond also links the activated corin protease fragment with Atrial natriuretic peptide-converting enzyme, 180 kDa soluble fragment. Highly expressed in heart. Also expressed in pregnant uterus.

Its subcellular location is the cell membrane. It is found in the secreted. Functionally, serine-type endopeptidase involved in atrial natriuretic peptide (NPPA) processing. Converts through proteolytic cleavage the non-functional propeptide NPPA into the active hormone, thereby regulating blood pressure in heart and promoting natriuresis, diuresis and vasodilation. Proteolytic cleavage of pro-NPPA also plays a role in female pregnancy by promoting trophoblast invasion and spiral artery remodeling in uterus. Also acts as a regulator of sodium reabsorption in kidney. May also process pro-NPPB the B-type natriuretic peptide. The sequence is that of Atrial natriuretic peptide-converting enzyme (Corin) from Mus musculus (Mouse).